We begin with the raw amino-acid sequence, 1043 residues long: MENAHTKTVEEVLGHFGVNESTGLSLEQVKKLKERWGSNELPAEEGKTLLELVIEQFEDLLVRILLLAACISFVLAWFEEGEETITAFVEPFVILLILVANAIVGVWQERNAENAIEALKEYEPEMGKVYRQDRKSVQRIKAKDIVPGDIVEIAVGDKVPADIRLTSIKSTTLRVDQSILTGESVSVIKHTDPVPDPRAVNQDKKNMLFSGTNIAAGKAMGVVVATGVNTEIGKIRDEMVATEQERTPLQQKLDEFGEQLSKVISLICIAVWIINIGHFNDPVHGGSWIRGAIYYFKIAVALAVAAIPEGLPAVITTCLALGTRRMAKKNAIVRSLPSVETLGCTSVICSDKTGTLTTNQMSVCRMFILDKVEGDTCSLNEFTITGSTYAPIGEVQKDDKPVKCHQYDGLVELATICALCNDSALDYNEAKGVYEKVGEATETALTCLVEKMNVFDTELKGLSKIERANACNSVIKQLMKKEFTLEFSRDRKSMSVYCTPNKPSRTSMSKMFVKGAPEGVIDRCTHIRVGSTKVPMTPGVKQKIMSVIREWGSGSDTLRCLALATHDNPLRREEMHLEDSANFIKYETNLTFVGCVGMLDPPRIEVASSVKLCRQAGIRVIMITGDNKGTAVAICRRIGIFGQDEDVTSKAFTGREFDELSPSAQRDACLNARCFARVEPSHKSKIVEFLQSFDEITAMTGDGVNDAPALKKSEIGIAMGSGTAVAKTASEMVLADDNFSTIVAAVEEGRAIYNNMKQFIRYLISSNVGEVVCIFLTAALGFPEALIPVQLLWVNLVTDGLPATALGFNPPDLDIMNKPPRNPKEPLISGWLFFRYLAIGCYVGAATVGAAAWWFIAADGGPRVSFYQLSHFLQCKEDNPDFEGVDCAIFESPYPMTMALSVLVTIEMCNALNSLSENQSLLRMPPWENIWLVGSICLSMSLHFLILYVEPLPLIFQITPLNLTQWLMVLKISLPVILMDETLKFVARNYLEPGKECAQPATKPSCSLSACTDGISWPFVLLIMPLVVWVYSTDTNFSDMFWS.

Residues 1–48 (MENAHTKTVEEVLGHFGVNESTGLSLEQVKKLKERWGSNELPAEEGKT) lie on the Cytoplasmic side of the membrane. The residue at position 38 (Ser38) is a Phosphoserine. The helical transmembrane segment at 49–69 (LLELVIEQFEDLLVRILLLAA) threads the bilayer. The Lumenal segment spans residues 70-89 (CISFVLAWFEEGEETITAFV). The helical transmembrane segment at 90 to 110 (EPFVILLILVANAIVGVWQER) threads the bilayer. The Cytoplasmic segment spans residues 111 to 253 (NAENAIEALK…QERTPLQQKL (143 aa)). A helical membrane pass occupies residues 254 to 273 (DEFGEQLSKVISLICIAVWI). The Lumenal portion of the chain corresponds to 274-295 (INIGHFNDPVHGGSWIRGAIYY). A 3'-nitrotyrosine mark is found at Tyr294 and Tyr295. Residues 296–313 (FKIAVALAVAAIPEGLPA) form a helical membrane-spanning segment. Val304, Ala305, Ile307, and Glu309 together coordinate Ca(2+). Residues 314-756 (VITTCLALGT…EEGRAIYNNM (443 aa)) lie on the Cytoplasmic side of the membrane. Catalysis depends on Asp351, which acts as the 4-aspartylphosphate intermediate. The Mg(2+) site is built by Asp351 and Thr353. Thr353 is an ATP binding site. Thr441 is modified (phosphothreonine). ATP-binding residues include Glu442, Arg489, and Lys514. Ser531 carries the post-translational modification Phosphoserine. Arg559 contacts ATP. The interaction with HAX1 stretch occupies residues 575–594 (MHLEDSANFIKYETNLTFVG). Ser580 carries the post-translational modification Phosphoserine. The ATP site is built by Thr624, Gly625, and Asp626. Phosphoserine is present on residues Ser661 and Ser663. ATP is bound by residues Arg677 and Lys683. A Mg(2+)-binding site is contributed by Asp702. Residue Asn705 coordinates ATP. The helical transmembrane segment at 757 to 776 (KQFIRYLISSNVGEVVCIFL) threads the bilayer. Asn767 and Glu770 together coordinate Ca(2+). At 777–786 (TAALGFPEAL) the chain is on the lumenal side. A helical transmembrane segment spans residues 787 to 807 (IPVQLLWVNLVTDGLPATALG). The interval 787–807 (IPVQLLWVNLVTDGLPATALG) is interaction with PLN. The tract at residues 788 to 1043 (PVQLLWVNLV…DTNFSDMFWS (256 aa)) is interaction with TMEM64 and PDIA3. Residues Asn795, Thr798, and Asp799 each coordinate Ca(2+). Over 808 to 827 (FNPPDLDIMNKPPRNPKEPL) the chain is Cytoplasmic. Residues 828-850 (ISGWLFFRYLAIGCYVGAATVGA) traverse the membrane as a helical segment. Residues 851–896 (AAWWFIAADGGPRVSFYQLSHFLQCKEDNPDFEGVDCAIFESPYPM) lie on the Lumenal side of the membrane. The cysteines at positions 875 and 887 are disulfide-linked. A helical transmembrane segment spans residues 897–916 (TMALSVLVTIEMCNALNSLS). Glu907 contributes to the Ca(2+) binding site. The Cytoplasmic segment spans residues 917 to 929 (ENQSLLRMPPWEN). Residues 930 to 948 (IWLVGSICLSMSLHFLILY) traverse the membrane as a helical segment. An interaction with PLN region spans residues 931–942 (WLVGSICLSMSL). At 949 to 963 (VEPLPLIFQITPLNL) the chain is on the lumenal side. The helical transmembrane segment at 964–984 (TQWLMVLKISLPVILMDETLK) threads the bilayer. Over 985–1043 (FVARNYLEPGKECAQPATKPSCSLSACTDGISWPFVLLIMPLVVWVYSTDTNFSDMFWS) the chain is Cytoplasmic.

The protein belongs to the cation transport ATPase (P-type) (TC 3.A.3) family. Type IIA subfamily. Interacts with sarcolipin (SLN); the interaction inhibits ATP2A2 Ca(2+) affinity. Interacts with phospholamban (PLN); the interaction inhibits ATP2A2 Ca(2+) affinity. Interacts with myoregulin (MRLN). Interacts with ARLN and ERLN; the interactions inhibit ATP2A2 Ca(2+) affinity. Interacts with STRIT1/DWORF; the interaction results in activation of ATP2A2. Interacts with the monomeric forms of SLN, PLN, ARLN, ERLN and STRI1/DWORF. Interacts with HAX1. Interacts with S100A8 and S100A9. Interacts with SLC35G1 and STIM1. Interacts with TMEM203. Interacts with TMEM64 and PDIA3. Interacts with TMX1. Interacts with TMX2. Interacts with VMP1; VMP1 competes with PLN and SLN to prevent them from forming an inhibitory complex with ATP2A2. Interacts with ULK1. Interacts with S100A1 in a Ca(2+)-dependent manner. Interacts with TUNAR. Interacts with FLVCR2; this interaction occurs in the absence of heme and promotes ATP2A2 proteasomal degradation; this complex is dissociated upon heme binding. Interacts with FNIP1. In terms of assembly, interacts with TRAM2 (via C-terminus). Requires Mg(2+) as cofactor. Post-translationally, nitrated under oxidative stress. Nitration on the two tyrosine residues inhibits catalytic activity. Serotonylated on Gln residues by TGM2 in response to hypoxia, leading to its inactivation. In terms of tissue distribution, isoform 2 is highly expressed in heart and slow twitch skeletal muscle. Isoform 1 is widely expressed.

Its subcellular location is the endoplasmic reticulum membrane. The protein resides in the sarcoplasmic reticulum membrane. It catalyses the reaction Ca(2+)(in) + ATP + H2O = Ca(2+)(out) + ADP + phosphate + H(+). With respect to regulation, has different conformational states with differential Ca2+ affinity. The E1 conformational state (active form) shows high Ca(2+) affinity, while the E2 state exhibits low Ca(2+) affinity. Binding of ATP allosterically increases its affinity for subsequent binding of Ca2+. Reversibly inhibited by phospholamban (PLN) at low calcium concentrations. PLN inhibits ATP2A2 Ca(2+) affinity by disrupting its allosteric activation by ATP. Inhibited by sarcolipin (SLN) and myoregulin (MRLN). The inhibition is blocked by VMP1. Enhanced by STRIT1/DWORF; STRIT1 increases activity by displacing sarcolipin (SLN), phospholamban (PLN) and myoregulin (MRLN). Stabilizes SERCA2 in its E2 state. Functionally, this magnesium-dependent enzyme catalyzes the hydrolysis of ATP coupled with the translocation of calcium from the cytosol to the sarcoplasmic reticulum lumen. Involved in autophagy in response to starvation. Upon interaction with VMP1 and activation, controls ER-isolation membrane contacts for autophagosome formation. Also modulates ER contacts with lipid droplets, mitochondria and endosomes. In coordination with FLVCR2 mediates heme-stimulated switching from mitochondrial ATP synthesis to thermogenesis. Its function is as follows. Involved in the regulation of the contraction/relaxation cycle. Acts as a regulator of TNFSF11-mediated Ca(2+) signaling pathways via its interaction with TMEM64 which is critical for the TNFSF11-induced CREB1 activation and mitochondrial ROS generation necessary for proper osteoclast generation. Association between TMEM64 and SERCA2 in the ER leads to cytosolic Ca(2+) spiking for activation of NFATC1 and production of mitochondrial ROS, thereby triggering Ca(2+) signaling cascades that promote osteoclast differentiation and activation. In Rattus norvegicus (Rat), this protein is Sarcoplasmic/endoplasmic reticulum calcium ATPase 2 (Atp2a2).